We begin with the raw amino-acid sequence, 262 residues long: tRNA pseudouridine synthase A (262 aa).

The active-site Nucleophile is the aspartate 55. Tyrosine 116 is a substrate binding site.

This sequence belongs to the tRNA pseudouridine synthase TruA family. As to quaternary structure, homodimer.

The enzyme catalyses uridine(38/39/40) in tRNA = pseudouridine(38/39/40) in tRNA. Functionally, formation of pseudouridine at positions 38, 39 and 40 in the anticodon stem and loop of transfer RNAs. The chain is tRNA pseudouridine synthase A from Bdellovibrio bacteriovorus (strain ATCC 15356 / DSM 50701 / NCIMB 9529 / HD100).